We begin with the raw amino-acid sequence, 321 residues long: NADH-ubiquinone oxidoreductase chain 1 (321 aa).

8 helical membrane passes run 9–29 (ITNS…LTLL), 75–95 (ILFT…WAPM), 106–126 (LGLL…LWSG), 151–171 (TLGL…LMLF), 177–197 (HMWL…STLA), 219–239 (VEFS…NILF), 256–276 (PQLF…LFLW), and 297–317 (YLPL…ALCG).

It belongs to the complex I subunit 1 family.

The protein localises to the mitochondrion inner membrane. It catalyses the reaction a ubiquinone + NADH + 5 H(+)(in) = a ubiquinol + NAD(+) + 4 H(+)(out). Core subunit of the mitochondrial membrane respiratory chain NADH dehydrogenase (Complex I) that is believed to belong to the minimal assembly required for catalysis. Complex I functions in the transfer of electrons from NADH to the respiratory chain. The immediate electron acceptor for the enzyme is believed to be ubiquinone. The protein is NADH-ubiquinone oxidoreductase chain 1 (MT-ND1) of Lycodon semicarinatus (Ryukyu odd-tooth snake).